The primary structure comprises 476 residues: Aspartyl/glutamyl-tRNA(Asn/Gln) amidotransferase subunit B (476 aa).

The protein belongs to the GatB/GatE family. GatB subfamily. Heterotrimer of A, B and C subunits.

It carries out the reaction L-glutamyl-tRNA(Gln) + L-glutamine + ATP + H2O = L-glutaminyl-tRNA(Gln) + L-glutamate + ADP + phosphate + H(+). The catalysed reaction is L-aspartyl-tRNA(Asn) + L-glutamine + ATP + H2O = L-asparaginyl-tRNA(Asn) + L-glutamate + ADP + phosphate + 2 H(+). Allows the formation of correctly charged Asn-tRNA(Asn) or Gln-tRNA(Gln) through the transamidation of misacylated Asp-tRNA(Asn) or Glu-tRNA(Gln) in organisms which lack either or both of asparaginyl-tRNA or glutaminyl-tRNA synthetases. The reaction takes place in the presence of glutamine and ATP through an activated phospho-Asp-tRNA(Asn) or phospho-Glu-tRNA(Gln). This chain is Aspartyl/glutamyl-tRNA(Asn/Gln) amidotransferase subunit B, found in Albidiferax ferrireducens (strain ATCC BAA-621 / DSM 15236 / T118) (Rhodoferax ferrireducens).